Consider the following 122-residue polypeptide: Small ribosomal subunit protein uS13 (122 aa).

The segment at 95–122 (GLPVRGQRTHTNARTRKGPAKSIAGKKK) is disordered.

Belongs to the universal ribosomal protein uS13 family. In terms of assembly, part of the 30S ribosomal subunit. Forms a loose heterodimer with protein S19. Forms two bridges to the 50S subunit in the 70S ribosome.

Located at the top of the head of the 30S subunit, it contacts several helices of the 16S rRNA. In the 70S ribosome it contacts the 23S rRNA (bridge B1a) and protein L5 of the 50S subunit (bridge B1b), connecting the 2 subunits; these bridges are implicated in subunit movement. Contacts the tRNAs in the A and P-sites. This chain is Small ribosomal subunit protein uS13, found in Nitrobacter winogradskyi (strain ATCC 25391 / DSM 10237 / CIP 104748 / NCIMB 11846 / Nb-255).